Here is a 274-residue protein sequence, read N- to C-terminus: uncharacterized protein (274 aa).

Residues 1 to 19 form the signal peptide; sequence MKRINKVLLSLLCLVIAYA.

This is an uncharacterized protein from Rickettsia prowazekii (strain Madrid E).